We begin with the raw amino-acid sequence, 356 residues long: Carbohydrate sulfotransferase 10 (356 aa).

Residues 1-6 lie on the Cytoplasmic side of the membrane; it reads MHHQWL. A helical; Signal-anchor for type II membrane protein membrane pass occupies residues 7-27; that stretch reads LLAACFWVIFMFMVASKFITL. Residues 28–356 lie on the Lumenal side of the membrane; that stretch reads TFKDPDVYSA…GYQKPDFLLN (329 aa). Asn-99 carries an N-linked (GlcNAc...) asparagine glycan. Residues 127–133 and 189–197 each bind 3'-phosphoadenylyl sulfate; these read PKVGNTQ and RDPFERLIS. Residues Asn-228 and Asn-316 are each glycosylated (N-linked (GlcNAc...) asparagine).

It belongs to the sulfotransferase 2 family. As to expression, in fetal tissues, it is predominantly expressed in brain, and weakly expressed in lung, kidney and liver. In adult, it is highly expressed in brain, testis, ovary, expressed at intermediate level in heart, pancreas, skeletal muscle, spleen and thymus, and weakly expressed in other tissues. In brain, it is expressed at higher level in the frontal lobe.

It is found in the golgi apparatus membrane. It catalyses the reaction 3-O-{beta-D-GlcA-(1-&gt;[3)-alpha-D-Xyl-(1-&gt;3)-beta-D-GlcA-(1-&gt;](n)-4)-beta-D-Xyl-(1-&gt;4)-Rib-ol-P-Rib-ol-P-3-beta-D-GalNAc-(1-&gt;3)-beta-D-GlcNAc-(1-&gt;4)-O-6-P-alpha-D-Man}-L-Thr-[protein] + 3'-phosphoadenylyl sulfate = 3-O-{O-3-S-beta-D-GlcA-(1-&gt;[3)-alpha-D-Xyl-(1-&gt;3)-beta-D-GlcA-(1-&gt;](n)-4)-beta-D-Xyl-(1-&gt;4)-Rib-ol-P-Rib-ol-P-3-beta-D-GalNAc-(1-&gt;3)-beta-D-GlcNAc-(1-&gt;4)-O-6-P-alpha-D-Man}-L-Thr-[protein] + adenosine 3',5'-bisphosphate + H(+). The catalysed reaction is 17beta-estradiol 3-O-(beta-D-glucuronate) + 3'-phosphoadenylyl sulfate = 17beta-estradiol 3-O-(3-sulfo-beta-D-glucuronate) + adenosine 3',5'-bisphosphate + H(+). It carries out the reaction 17beta-estradiol 3-O-(beta-D-glucuronate) 17-sulfate + 3'-phosphoadenylyl sulfate = 17beta-estradiol 3-O-(3-sulfo-beta-D-glucuronate) 17-sulfate + adenosine 3',5'-bisphosphate + H(+). The enzyme catalyses 17beta-estradiol 17-O-(beta-D-glucuronate) + 3'-phosphoadenylyl sulfate = 17beta-estradiol 17-O-(3-sulfo-beta-D-glucuronate) + adenosine 3',5'-bisphosphate + H(+). It catalyses the reaction 16alpha,17beta-estriol 3-O-(beta-D-glucuronate) + 3'-phosphoadenylyl sulfate = 16alpha,17beta-estriol 3-O-(3-sulfo-beta-D-glucuronate) + adenosine 3',5'-bisphosphate + H(+). The catalysed reaction is 16alpha,17beta-estriol 16-O-(beta-D-glucuronate) + 3'-phosphoadenylyl sulfate = 16alpha,17beta-estriol 16-O-(3-sulfo-beta-D-glucuronate) + adenosine 3',5'-bisphosphate + H(+). It carries out the reaction 16alpha,17beta-estriol 17-O-(beta-D-glucuronate) + 3'-phosphoadenylyl sulfate = 16alpha,17beta-estriol 17-O-(3-sulfo-beta-D-glucuronate) + adenosine 3',5'-bisphosphate + H(+). The enzyme catalyses estrone 3-O-(beta-D-glucuronate) + 3'-phosphoadenylyl sulfate = estrone 3-O-(3-sulfo-beta-D-glucuronate) + adenosine 3',5'-bisphosphate + H(+). It catalyses the reaction 3alpha,20alpha-dihydroxy-5beta-pregnane 3-O-(beta-D-glucuronate) + 3'-phosphoadenylyl sulfate = 3alpha,20alpha-dihydroxy-5beta-pregnane 3-O-(3-sulfo-beta-D-glucuronate) + adenosine 3',5'-bisphosphate + H(+). The catalysed reaction is testosterone 17-O-(beta-D-glucuronate) + 3'-phosphoadenylyl sulfate = testosterone 17-O-(3-sulfo-beta-D-glucuronate) + adenosine 3',5'-bisphosphate + H(+). It carries out the reaction 3beta-androst-5-en-17-one 3-O-(beta-D-glucuronate) + 3'-phosphoadenylyl sulfate = 3beta-androst-5-en-17-one 3-O-(3-sulfo-beta-D-glucuronate) + adenosine 3',5'-bisphosphate + H(+). The enzyme catalyses 3alpha,17alpha-dihydroxy-5beta-androstane-11-one-17beta-carboxylate 3-O-(beta-D-glucuronate) + 3'-phosphoadenylyl sulfate = 3alpha,17alpha-dihydroxy-5beta-androstane-11-one-17beta-carboxylate 3-O-(3-sulfo-beta-D-glucuronate) + adenosine 3',5'-bisphosphate + H(+). It catalyses the reaction 3alpha-hydroxyetiocholan-17-one 3-O-(beta-D-glucuronate) + 3'-phosphoadenylyl sulfate = 3alpha-hydroxyetiocholan-17-one 3-O-(3-sulfo-beta-D-glucuronate) + adenosine 3',5'-bisphosphate + H(+). The protein operates within steroid metabolism. Its pathway is protein modification; carbohydrate sulfation. Catalyzes the transfer of sulfate from 3'-phosphoadenylyl sulfate (PAPS) to position 3 of terminal glucuronic acid of both protein- and lipid-linked oligosaccharides. Participates in biosynthesis of HNK-1 carbohydrate structure 3-O-sulfo-beta-D-GlcA-(1-&gt;3)-beta-D-Gal-(1-&gt;4)-D-GlcNAc-R, a sulfated glucuronyl-lactosaminyl residue carried by many neural recognition molecules, which is involved in cell interactions during ontogenetic development and in synaptic plasticity in the adult. May be indirectly involved in synapse plasticity of the hippocampus, via its role in HNK-1 biosynthesis. Sulfates terminal glucuronyl residue of the laminin globular (LG)-domain binding epitope on DAG1/alpha-dystroglycan and prevents further polymerization by LARGE1 glycosyltransferase. Likely defines the chain length of LG epitope, conferring binding specificity to extracellular matrix components. Plays a role in down-regulating the steroid hormones. Sulfates glucuronidated estrogens and androgens with an impact in hormone cycle and fertility. Has a preference for glucuronyl moiety at the 3-hydroxyl group of a sterol ring rather than the 17-hydroxyl group, showing high catalytic efficiency for 17beta-estradiol 3-O-(beta-D-glucuronate) and dehydroepiandrosterone 3-O-(beta-D-glucuronate) hormones. This Homo sapiens (Human) protein is Carbohydrate sulfotransferase 10.